We begin with the raw amino-acid sequence, 281 residues long: Large ribosomal subunit protein uL2 (281 aa).

Residues 222-281 (TVRGSVMNPNDHPHGGGEGRTPIGRKSPVTPWGKKALGVKTRNTKKPSEKLIVRKRNAKK) are disordered.

The protein belongs to the universal ribosomal protein uL2 family. As to quaternary structure, part of the 50S ribosomal subunit. Forms a bridge to the 30S subunit in the 70S ribosome.

In terms of biological role, one of the primary rRNA binding proteins. Required for association of the 30S and 50S subunits to form the 70S ribosome, for tRNA binding and peptide bond formation. It has been suggested to have peptidyltransferase activity; this is somewhat controversial. Makes several contacts with the 16S rRNA in the 70S ribosome. The sequence is that of Large ribosomal subunit protein uL2 from Mesoplasma florum (strain ATCC 33453 / NBRC 100688 / NCTC 11704 / L1) (Acholeplasma florum).